We begin with the raw amino-acid sequence, 524 residues long: 2-isopropylmalate synthase (524 aa).

The region spanning 5–267 is the Pyruvate carboxyltransferase domain; sequence VIIFDTTLRD…HTNINHQEIF (263 aa). D14, H202, H204, and N238 together coordinate Mn(2+). The tract at residues 392-524 is regulatory domain; the sequence is SLDYFSVQSG…SKHQNNQETV (133 aa).

Belongs to the alpha-IPM synthase/homocitrate synthase family. LeuA type 1 subfamily. As to quaternary structure, homodimer. Mn(2+) is required as a cofactor.

Its subcellular location is the cytoplasm. It catalyses the reaction 3-methyl-2-oxobutanoate + acetyl-CoA + H2O = (2S)-2-isopropylmalate + CoA + H(+). It functions in the pathway amino-acid biosynthesis; L-leucine biosynthesis; L-leucine from 3-methyl-2-oxobutanoate: step 1/4. Catalyzes the condensation of the acetyl group of acetyl-CoA with 3-methyl-2-oxobutanoate (2-ketoisovalerate) to form 3-carboxy-3-hydroxy-4-methylpentanoate (2-isopropylmalate). The chain is 2-isopropylmalate synthase from Serratia proteamaculans (strain 568).